The chain runs to 256 residues: MRFDVLTLFPELFAPFQAVGVTRRAFESGAIDLKLWQPRDFADNAYRRVDDRPYGGGPGMVMLVEPLERALAAVRDDQAAAGAARTPVLLFSPAGAPLTQRRVEALASEAGAVLVCGRYEGIDQRFIDRHVDEELSLGDFVLSGGELPALALVDAVARLQPGVLNDQTSHQQDSFSDGLLDCPHYSRPEHLGDAAADGVPATLMSGHHAEIARWRRERQLELTARRRPDLIAAARAQGRLTKADERYLQSLPGLGL.

S-adenosyl-L-methionine contacts are provided by residues glycine 117 and 137-142 (LGDFVL).

It belongs to the RNA methyltransferase TrmD family. In terms of assembly, homodimer.

The protein resides in the cytoplasm. It catalyses the reaction guanosine(37) in tRNA + S-adenosyl-L-methionine = N(1)-methylguanosine(37) in tRNA + S-adenosyl-L-homocysteine + H(+). In terms of biological role, specifically methylates guanosine-37 in various tRNAs. The protein is tRNA (guanine-N(1)-)-methyltransferase of Methylibium petroleiphilum (strain ATCC BAA-1232 / LMG 22953 / PM1).